The sequence spans 218 residues: Cytidylate kinase (218 aa).

Residue 21–29 (GPAASGKGT) participates in ATP binding.

It belongs to the cytidylate kinase family. Type 1 subfamily.

The protein resides in the cytoplasm. The catalysed reaction is CMP + ATP = CDP + ADP. It carries out the reaction dCMP + ATP = dCDP + ADP. This is Cytidylate kinase from Rickettsia canadensis (strain McKiel).